A 286-amino-acid polypeptide reads, in one-letter code: Meteorin-like protein (286 aa).

The signal sequence occupies residues 1–21 (MLSPFLAYLLSVVLLCRIARS). Disulfide bonds link Cys28–Cys51, Cys84–Cys120, Cys165–Cys235, Cys168–Cys259, and Cys178–Cys281.

This sequence belongs to the meteorin family.

The protein localises to the secreted. Functionally, hormone induced following exercise or cold exposure that promotes energy expenditure. Induced either in the skeletal muscle after exercise or in adipose tissue following cold exposure and is present in the circulation. Able to stimulate energy expenditure associated with the browning of the white fat depots and improves glucose tolerance. This chain is Meteorin-like protein (metrnl), found in Danio rerio (Zebrafish).